The sequence spans 214 residues: Cell division protein DamX (214 aa).

Polar residues-rich tracts occupy residues 1-14 (GSGT…QPQQ) and 43-53 (QGMTGAASTLP). The disordered stretch occupies residues 1-133 (GSGTPTEAQT…SVQSAPGSHY (133 aa)). The chain crosses the membrane as a helical span at residues 44-65 (GMTGAASTLPTAPATVMSGAAA). Composition is skewed to low complexity over residues 78-97 (QQHK…TQHK) and 110-131 (SSTA…APGS). The SPOR domain maps to 127–204 (SAPGSHYTLQ…VQAKKPWVRP (78 aa)).

This sequence belongs to the DamX family.

Its subcellular location is the cell inner membrane. In terms of biological role, non-essential cell division protein. This is Cell division protein DamX from Serratia marcescens.